Consider the following 461-residue polypeptide: Trigger factor (461 aa).

The region spanning 169 to 256 is the PPIase FKBP-type domain; that stretch reads GDTAVIDFAG…LKDLKIKELP (88 aa). Positions 432–461 are disordered; the sequence is PGEAIEPGSGEDAPPEVAAGATEPEAQPNS.

Belongs to the FKBP-type PPIase family. Tig subfamily.

Its subcellular location is the cytoplasm. It catalyses the reaction [protein]-peptidylproline (omega=180) = [protein]-peptidylproline (omega=0). Involved in protein export. Acts as a chaperone by maintaining the newly synthesized protein in an open conformation. Functions as a peptidyl-prolyl cis-trans isomerase. In Gloeobacter violaceus (strain ATCC 29082 / PCC 7421), this protein is Trigger factor.